Consider the following 276-residue polypeptide: 2-dehydro-3-deoxyphosphooctonate aldolase (276 aa).

The protein belongs to the KdsA family.

Its subcellular location is the cytoplasm. The enzyme catalyses D-arabinose 5-phosphate + phosphoenolpyruvate + H2O = 3-deoxy-alpha-D-manno-2-octulosonate-8-phosphate + phosphate. It functions in the pathway carbohydrate biosynthesis; 3-deoxy-D-manno-octulosonate biosynthesis; 3-deoxy-D-manno-octulosonate from D-ribulose 5-phosphate: step 2/3. The protein operates within bacterial outer membrane biogenesis; lipopolysaccharide biosynthesis. The protein is 2-dehydro-3-deoxyphosphooctonate aldolase of Xanthomonas axonopodis pv. citri (strain 306).